The following is a 456-amino-acid chain: Phosphomannomutase (456 aa).

Residue S98 is the Phosphoserine intermediate of the active site. Residues S98, D245, D247, and D249 each contribute to the Mg(2+) site.

Belongs to the phosphohexose mutase family. The cofactor is Mg(2+).

The catalysed reaction is alpha-D-mannose 1-phosphate = D-mannose 6-phosphate. The protein operates within nucleotide-sugar biosynthesis; GDP-alpha-D-mannose biosynthesis; alpha-D-mannose 1-phosphate from D-fructose 6-phosphate: step 2/2. Its function is as follows. Involved in the biosynthesis of the capsular polysaccharide colanic acid. The sequence is that of Phosphomannomutase (manB) from Salmonella typhimurium (strain LT2 / SGSC1412 / ATCC 700720).